Reading from the N-terminus, the 654-residue chain is Meiotically up-regulated gene 24 protein (654 aa).

The RRM 1 domain occupies 299-355 (RNVFIGNLPSSYHEKEIEEAFGKFGKIEHIKILSKKNIAFVHFLNIRDAIKVVRTLS). Residues 383-404 (SCFTSKQNPDTTSDRCRQQESK) are disordered. Over residues 384–393 (CFTSKQNPDT) the composition is skewed to polar residues. Residues 394-404 (TSDRCRQQESK) are compositionally biased toward basic and acidic residues. RRM domains are found at residues 409–482 (RTVF…WGKE) and 500–571 (RNVY…YAPD).

Its subcellular location is the cytoplasm. In terms of biological role, has a role in meiosis. The sequence is that of Meiotically up-regulated gene 24 protein (mug24) from Schizosaccharomyces pombe (strain 972 / ATCC 24843) (Fission yeast).